Here is a 250-residue protein sequence, read N- to C-terminus: Manganese transport system ATP-binding protein MntB (250 aa).

Residues 4 to 236 enclose the ABC transporter domain; the sequence is VELDNVTVAY…NLQKTYGGRL (233 aa). 36–43 is an ATP binding site; it reads GPNGAGKS.

Belongs to the ABC transporter superfamily. In terms of assembly, the complex is probably composed of two ATP-binding proteins (MntB), two transmembrane proteins (MntC and MntD) and a solute-binding protein (MntA).

The protein localises to the cell membrane. Its function is as follows. Probably part of the ABC transporter complex MntABCD involved in manganese import. Probably responsible for energy coupling to the transport system. The sequence is that of Manganese transport system ATP-binding protein MntB from Bacillus subtilis (strain 168).